Here is a 227-residue protein sequence, read N- to C-terminus: Isopentenyl-diphosphate Delta-isomerase 1 (227 aa).

Substrate is bound at residue lysine 36. 2 residues coordinate Mg(2+): histidine 40 and histidine 51. The region spanning 49–199 (LLHRAFSVFL…EIKITPWFKI (151 aa)) is the Nudix hydrolase domain. The substrate site is built by arginine 70 and lysine 74. Residue cysteine 86 is part of the active site. Residue serine 87 coordinates substrate. Glutamate 146 and glutamate 148 together coordinate Mg(2+). The active site involves glutamate 148. Lysine 176 is subject to N6-acetyllysine. A Microbody targeting signal motif is present at residues 225 to 227 (YRI).

It belongs to the IPP isomerase type 1 family. As to quaternary structure, monomer. Mg(2+) is required as a cofactor.

The protein resides in the peroxisome. The catalysed reaction is isopentenyl diphosphate = dimethylallyl diphosphate. It participates in isoprenoid biosynthesis; dimethylallyl diphosphate biosynthesis; dimethylallyl diphosphate from isopentenyl diphosphate: step 1/1. In terms of biological role, catalyzes the 1,3-allylic rearrangement of the homoallylic substrate isopentenyl (IPP) to its highly electrophilic allylic isomer, dimethylallyl diphosphate (DMAPP). The chain is Isopentenyl-diphosphate Delta-isomerase 1 (IDI1) from Pongo abelii (Sumatran orangutan).